The chain runs to 191 residues: Flagellar transcriptional regulator FlhC (191 aa).

Positions 137, 140, 157, and 160 each coordinate Zn(2+).

It belongs to the FlhC family. In terms of assembly, heterohexamer composed of two FlhC and four FlhD subunits. Each FlhC binds a FlhD dimer, forming a heterotrimer, and a hexamer assembles by dimerization of two heterotrimers. Zn(2+) is required as a cofactor.

The protein localises to the cytoplasm. Functions in complex with FlhD as a master transcriptional regulator that regulates transcription of several flagellar and non-flagellar operons by binding to their promoter region. Activates expression of class 2 flagellar genes, including fliA, which is a flagellum-specific sigma factor that turns on the class 3 genes. Also regulates genes whose products function in a variety of physiological pathways. The polypeptide is Flagellar transcriptional regulator FlhC (Nitrosomonas eutropha (strain DSM 101675 / C91 / Nm57)).